Reading from the N-terminus, the 92-residue chain is Small ribosomal subunit protein uS19 (92 aa).

This sequence belongs to the universal ribosomal protein uS19 family.

Protein S19 forms a complex with S13 that binds strongly to the 16S ribosomal RNA. This chain is Small ribosomal subunit protein uS19, found in Polynucleobacter asymbioticus (strain DSM 18221 / CIP 109841 / QLW-P1DMWA-1) (Polynucleobacter necessarius subsp. asymbioticus).